The primary structure comprises 293 residues: N-acetylneuraminate lyase (293 aa).

The aceneuramate site is built by Ser-47, Thr-48, and Tyr-136. Tyr-136 functions as the Proton donor in the catalytic mechanism. Residue Lys-164 is the Schiff-base intermediate with substrate of the active site. Positions 166, 188, 190, 191, 207, and 251 each coordinate aceneuramate.

This sequence belongs to the DapA family. NanA subfamily. In terms of assembly, homotetramer.

The protein localises to the cytoplasm. It catalyses the reaction aceneuramate = aldehydo-N-acetyl-D-mannosamine + pyruvate. The protein operates within amino-sugar metabolism; N-acetylneuraminate degradation; D-fructose 6-phosphate from N-acetylneuraminate: step 1/5. Catalyzes the reversible aldol cleavage of N-acetylneuraminic acid (sialic acid; Neu5Ac) to form pyruvate and N-acetylmannosamine (ManNAc) via a Schiff base intermediate. This is N-acetylneuraminate lyase from Pasteurella multocida (strain Pm70).